A 318-amino-acid polypeptide reads, in one-letter code: NLP effector protein 7 (318 aa).

An N-terminal signal peptide occupies residues 1 to 19 (MRLFAFLWSSVAFLSTVQA). Over residues 23–41 (QTASQTQDDSSTPTPTPTD) the composition is skewed to low complexity. 2 disordered regions span residues 23 to 42 (QTAS…PTDK) and 51 to 96 (RTKT…TPDP). Over residues 55-65 (PMATPNRTIMP) the composition is skewed to polar residues. Residue Asn60 is glycosylated (N-linked (GlcNAc...) asparagine). Over residues 73 to 96 (TEPPTPEPTYLPTPSPTPAPTPDP) the composition is skewed to pro residues. A Conserved undecapeptide motif I motif is present at residues 185–195 (AIMYSWYFPKD). A Hepta-peptide GHRHDWE motif II motif is present at residues 202–208 (GHRHDWE).

Belongs to the Necrosis inducing protein (NPP1) family.

It localises to the secreted. Secreted effector that contributes moderately to virulence during infection by P.capsici. Does not cause visible reaction of C.annuum for several days after inoculation, but by 7 days after inoculation, small necrotic lesions become visible. Leads only to chlorotic areas, without necrosis at 7 days after non-host N.benthamiana leaves infection. This Phytophthora capsici protein is NLP effector protein 7.